The chain runs to 175 residues: Sec-independent protein translocase protein TatB (175 aa).

Residues 1–21 (MLDLGLSKMALIGVVALVVLG) traverse the membrane as a helical segment. A compositionally biased stretch (low complexity) spans 94–115 (SAVSPGGSAAADAPDGPSAASG). 2 disordered regions span residues 94-118 (SAVS…GEPS) and 153-175 (VQSG…ARFL). A compositionally biased stretch (basic residues) spans 160–175 (VARHRPASLRRPARFL).

Belongs to the TatB family. As to quaternary structure, the Tat system comprises two distinct complexes: a TatABC complex, containing multiple copies of TatA, TatB and TatC subunits, and a separate TatA complex, containing only TatA subunits. Substrates initially bind to the TatABC complex, which probably triggers association of the separate TatA complex to form the active translocon.

The protein resides in the cell inner membrane. Its function is as follows. Part of the twin-arginine translocation (Tat) system that transports large folded proteins containing a characteristic twin-arginine motif in their signal peptide across membranes. Together with TatC, TatB is part of a receptor directly interacting with Tat signal peptides. TatB may form an oligomeric binding site that transiently accommodates folded Tat precursor proteins before their translocation. This is Sec-independent protein translocase protein TatB from Burkholderia pseudomallei (strain 1106a).